Consider the following 337-residue polypeptide: GTPase Obg (337 aa).

The Obg domain maps to 1–159 (MDFIDEVKLY…RNIVLKLKVL (159 aa)). One can recognise an OBG-type G domain in the interval 160-329 (SDVGIIGMPN…LNEKVKTKEI (170 aa)). GTP is bound by residues 166–173 (GMPNVGKS), 191–195 (FTTIR), 212–215 (DIPG), 279–282 (NKCD), and 310–312 (DDD). Mg(2+) is bound by residues Ser173 and Thr193.

The protein belongs to the TRAFAC class OBG-HflX-like GTPase superfamily. OBG GTPase family. Monomer. Requires Mg(2+) as cofactor.

Its subcellular location is the cytoplasm. In terms of biological role, an essential GTPase which binds GTP, GDP and possibly (p)ppGpp with moderate affinity, with high nucleotide exchange rates and a fairly low GTP hydrolysis rate. Plays a role in control of the cell cycle, stress response, ribosome biogenesis and in those bacteria that undergo differentiation, in morphogenesis control. This Wolbachia pipientis subsp. Culex pipiens (strain wPip) protein is GTPase Obg.